Consider the following 30-residue polypeptide: Uperin-6.1 (30 aa).

In terms of tissue distribution, expressed by the skin dorsal glands.

The protein resides in the secreted. The protein is Uperin-6.1 of Uperoleia inundata (Floodplain toadlet).